A 55-amino-acid polypeptide reads, in one-letter code: Large ribosomal subunit protein uL30 (55 aa).

This sequence belongs to the universal ribosomal protein uL30 family. Part of the 50S ribosomal subunit.

Functionally, binds the 5S and 23S rRNAs. In Deinococcus radiodurans (strain ATCC 13939 / DSM 20539 / JCM 16871 / CCUG 27074 / LMG 4051 / NBRC 15346 / NCIMB 9279 / VKM B-1422 / R1), this protein is Large ribosomal subunit protein uL30.